A 252-amino-acid chain; its full sequence is 7-cyano-7-deazaguanine synthase (252 aa).

Position 22–32 (22–32) interacts with ATP; sequence FSGGQDSTTCL. Zn(2+) contacts are provided by Cys-215, Cys-230, Cys-233, and Cys-236.

It belongs to the QueC family. It depends on Zn(2+) as a cofactor.

The catalysed reaction is 7-carboxy-7-deazaguanine + NH4(+) + ATP = 7-cyano-7-deazaguanine + ADP + phosphate + H2O + H(+). The protein operates within purine metabolism; 7-cyano-7-deazaguanine biosynthesis. Functionally, catalyzes the ATP-dependent conversion of 7-carboxy-7-deazaguanine (CDG) to 7-cyano-7-deazaguanine (preQ(0)). In Granulibacter bethesdensis (strain ATCC BAA-1260 / CGDNIH1), this protein is 7-cyano-7-deazaguanine synthase.